The following is an 84-amino-acid chain: Cell division topological specificity factor (84 aa).

The protein belongs to the MinE family.

Its function is as follows. Prevents the cell division inhibition by proteins MinC and MinD at internal division sites while permitting inhibition at polar sites. This ensures cell division at the proper site by restricting the formation of a division septum at the midpoint of the long axis of the cell. The chain is Cell division topological specificity factor from Cupriavidus necator (strain ATCC 17699 / DSM 428 / KCTC 22496 / NCIMB 10442 / H16 / Stanier 337) (Ralstonia eutropha).